We begin with the raw amino-acid sequence, 439 residues long: ATP-dependent DNA helicase dda (439 aa).

An ATP-binding site is contributed by 32-39; that stretch reads GPAGTGKT.

Monomer. Interacts with UvsX and gene 32 protein.

It carries out the reaction Couples ATP hydrolysis with the unwinding of duplex DNA at the replication fork by translocating in the 5'-3' direction. This creates two antiparallel DNA single strands (ssDNA). The leading ssDNA polymer is the template for DNA polymerase III holoenzyme which synthesizes a continuous strand.. The catalysed reaction is ATP + H2O = ADP + phosphate + H(+). Functionally, DNA helicase that stimulates viral DNA replication and recombination. Plays a role in T4 DNA replication initiation by selecting and activating DNA origins. Acts by dissociating and reassociating with the DNA molecule being unwound. Unwinds DNA as a monomer in a 5'-3' direction at a rate of 250 bp/s and can efficiently displace proteins from the DNA. The protein is ATP-dependent DNA helicase dda (dda) of Enterobacteria phage T4 (Bacteriophage T4).